A 307-amino-acid chain; its full sequence is 4-hydroxy-3-methylbut-2-enyl diphosphate reductase (307 aa).

A [4Fe-4S] cluster-binding site is contributed by Cys13. Residues His42 and His75 each coordinate (2E)-4-hydroxy-3-methylbut-2-enyl diphosphate. Dimethylallyl diphosphate is bound by residues His42 and His75. Residues His42 and His75 each contribute to the isopentenyl diphosphate site. Cys97 provides a ligand contact to [4Fe-4S] cluster. His125 serves as a coordination point for (2E)-4-hydroxy-3-methylbut-2-enyl diphosphate. Residue His125 participates in dimethylallyl diphosphate binding. His125 provides a ligand contact to isopentenyl diphosphate. Glu127 acts as the Proton donor in catalysis. Thr165 contacts (2E)-4-hydroxy-3-methylbut-2-enyl diphosphate. Cys195 provides a ligand contact to [4Fe-4S] cluster. (2E)-4-hydroxy-3-methylbut-2-enyl diphosphate is bound by residues Ser223, Ser224, Asn225, and Ser267. 4 residues coordinate dimethylallyl diphosphate: Ser223, Ser224, Asn225, and Ser267. 4 residues coordinate isopentenyl diphosphate: Ser223, Ser224, Asn225, and Ser267.

It belongs to the IspH family. Requires [4Fe-4S] cluster as cofactor.

It carries out the reaction isopentenyl diphosphate + 2 oxidized [2Fe-2S]-[ferredoxin] + H2O = (2E)-4-hydroxy-3-methylbut-2-enyl diphosphate + 2 reduced [2Fe-2S]-[ferredoxin] + 2 H(+). It catalyses the reaction dimethylallyl diphosphate + 2 oxidized [2Fe-2S]-[ferredoxin] + H2O = (2E)-4-hydroxy-3-methylbut-2-enyl diphosphate + 2 reduced [2Fe-2S]-[ferredoxin] + 2 H(+). Its pathway is isoprenoid biosynthesis; dimethylallyl diphosphate biosynthesis; dimethylallyl diphosphate from (2E)-4-hydroxy-3-methylbutenyl diphosphate: step 1/1. The protein operates within isoprenoid biosynthesis; isopentenyl diphosphate biosynthesis via DXP pathway; isopentenyl diphosphate from 1-deoxy-D-xylulose 5-phosphate: step 6/6. Its function is as follows. Catalyzes the conversion of 1-hydroxy-2-methyl-2-(E)-butenyl 4-diphosphate (HMBPP) into a mixture of isopentenyl diphosphate (IPP) and dimethylallyl diphosphate (DMAPP). Acts in the terminal step of the DOXP/MEP pathway for isoprenoid precursor biosynthesis. This Chlamydia trachomatis serovar L2b (strain UCH-1/proctitis) protein is 4-hydroxy-3-methylbut-2-enyl diphosphate reductase.